The primary structure comprises 113 residues: Ribulose bisphosphate carboxylase small subunit (113 aa).

The protein belongs to the RuBisCO small chain family. As to quaternary structure, heterohexadecamer of 8 large and 8 small subunits. RuBisCO interacts with the C-terminus of CcmM, and can be found in complexes that also include carbonic anhydrase (ccaA).

The protein resides in the carboxysome. Functionally, ruBisCO catalyzes two reactions: the carboxylation of D-ribulose 1,5-bisphosphate, the primary event in carbon dioxide fixation, as well as the oxidative fragmentation of the pentose substrate in the photorespiration process. Both reactions occur simultaneously and in competition at the same active site. Although the small subunit is not catalytic it is essential for maximal activity. The protein is Ribulose bisphosphate carboxylase small subunit of Synechocystis sp. (strain ATCC 27184 / PCC 6803 / Kazusa).